The following is a 338-amino-acid chain: MTTTLVSATIFDLSEVLCKGNKMLNYSAPSAGGCLLDRKAVGTPAGGGFPRRHSVTLPSSKFHQNQLLSSLKGEPAPALSSRDSRFRDRSFSEGGERLLPTQKQPGGGQVNSSRYKTELCRPFEENGACKYGDKCQFAHGIHELRSLTRHPKYKTELCRTFHTIGFCPYGPRCHFIHNAEERRALAGARDLSADRPRLQHSFSFAGFPSAAATAAATGLLDSPTSITPPPILSADDLLGSPTLPDGTNNPFAFSSQELASLFAPSMGLPGGGSPTTFLFRPMSESPHMFDSPPSPQDSLSDQEGYLSSSSSSHSGSDSPTLDNSRRLPIFSRLSISDD.

Residues 1–111 (MTTTLVSATI…QKQPGGGQVN (111 aa)) form a necessary and sufficient for the association with mRNA decay enzymes and mRNA decay activation region. Phosphoserine; by MAPKAPK2 is present on Ser-54. Position 90 is a phosphoserine; by PKB/AKT1 (Ser-90). Ser-92 is modified (phosphoserine; by PKB/AKT1 and MAPKAPK2). Residues 93–113 (EGGERLLPTQKQPGGGQVNSS) form a disordered region. 2 consecutive C3H1-type zinc fingers follow at residues 114–142 (RYKT…HGIH) and 152–180 (KYKT…HNAE). The tract at residues 185–338 (LAGARDLSAD…IFSRLSISDD (154 aa)) is necessary for mRNA decay activation. Ser-203 bears the Phosphoserine; by PKB/AKT1 and MAPKAPK2 mark. Positions 273–338 (SPTTFLFRPM…IFSRLSISDD (66 aa)) are disordered. Low complexity predominate over residues 296–318 (QDSLSDQEGYLSSSSSSHSGSDS). At Ser-318 the chain carries Phosphoserine. Ser-334 carries the post-translational modification Phosphoserine; by RPS6KA1.

As to quaternary structure, associates with the cytoplasmic CCR4-NOT deadenylase and RNA exosome complexes to trigger ARE-containing mRNA deadenylation and decay processes. Interacts with CNOT1. Interacts (via N-terminus) with CNOT6. Interacts with CNOT7; this interaction is inhibited in response to phorbol 12-myristate 13-acetate (PMA) treatment in a p38 MAPK-dependent manner. Interacts with DCP1A. Interacts (via N-terminus) with DCP2. Interacts (via N-terminus) with EXOSC2. Interacts with XRN1. Interacts (via phosphorylated form) with YWHAB; this interaction occurs in a protein kinase AKT1-dependent manner. Interacts (via phosphorylated form) with YWHAZ; this interaction occurs in a p38 MAPK- and AKT-signaling pathways. Post-translationally, phosphorylated. Phosphorylated by RPS6KA1 at Ser-334 upon phorbol 12-myristate 13-acetate (PMA) treatment; this phosphorylation results in dissociation of the CCR4-NOT deadenylase complex and induces p38 MAPK-mediated stabilization of the low-density lipoprotein receptor LDLR mRNA. Phosphorylated by protein kinase AKT1 at Ser-92 and Ser-203 in response to insulin; these phosphorylations stabilize ZFP36L1, increase the association with 14-3-3 proteins and mediate ARE-containing mRNA stabilization. AKT1-mediated phosphorylation at Ser-92 does not impair ARE-containing RNA-binding. Phosphorylated at Ser-54, Ser-92 and Ser-203 by MAPKAPK2; these phosphorylations increase the association with 14-3-3 proteins and mediate ARE-containing mRNA stabilization in a protein kinase AKT1-independent manner. MAPKAPK2-mediated phosphorylations at Ser-54, Ser-92 and Ser-203 do not impair ARE-containing RNA-binding. Phosphorylations increase the association with 14-3-3 proteins and mediate ARE-containing mRNA stabilization during early adipogenesis in a p38 MAPK- and AKT-dependent manner. In terms of processing, ubiquitinated. Ubiquitination leads to proteasomal degradation, a process inhibited by phosphorylations at Ser-90, Ser-92 and Ser-203. In terms of tissue distribution, expressed mainly in the basal epidermal layer, weakly in the suprabasal epidermal layers. Expressed in epidermal keratinocytes (at protein level). Expressed in osteoblasts.

The protein localises to the nucleus. The protein resides in the cytoplasm. Its subcellular location is the cytoplasmic granule. It is found in the P-body. Its function is as follows. Zinc-finger RNA-binding protein that destabilizes several cytoplasmic AU-rich element (ARE)-containing mRNA transcripts by promoting their poly(A) tail removal or deadenylation, and hence provide a mechanism for attenuating protein synthesis. Acts as a 3'-untranslated region (UTR) ARE mRNA-binding adapter protein to communicate signaling events to the mRNA decay machinery. Functions by recruiting the CCR4-NOT deadenylase complex and components of the cytoplasmic RNA decay machinery to the bound ARE-containing mRNAs, and hence promotes ARE-mediated mRNA deadenylation and decay processes. Also induces the degradation of ARE-containing mRNAs even in absence of poly(A) tail. Binds to 3'-UTR ARE of numerous mRNAs. Positively regulates early adipogenesis by promoting ARE-mediated mRNA decay of immediate early genes (IEGs). Promotes ARE-mediated mRNA decay of mineralocorticoid receptor NR3C2 mRNA in response to hypertonic stress. Negatively regulates hematopoietic/erythroid cell differentiation by promoting ARE-mediated mRNA decay of the transcription factor STAT5B mRNA. Positively regulates monocyte/macrophage cell differentiation by promoting ARE-mediated mRNA decay of the cyclin-dependent kinase CDK6 mRNA. Promotes degradation of ARE-containing pluripotency-associated mRNAs in embryonic stem cells (ESCs), such as NANOG, through a fibroblast growth factor (FGF)-induced MAPK-dependent signaling pathway, and hence attenuates ESC self-renewal and positively regulates mesendoderm differentiation. May play a role in mediating pro-apoptotic effects in malignant B-cells by promoting ARE-mediated mRNA decay of BCL2 mRNA. In association with ZFP36L2 maintains quiescence on developing B lymphocytes by promoting ARE-mediated decay of several mRNAs encoding cell cycle regulators that help B cells progress through the cell cycle, and hence ensuring accurate variable-diversity-joining (VDJ) recombination and functional immune cell formation. Together with ZFP36L2 is also necessary for thymocyte development and prevention of T-cell acute lymphoblastic leukemia (T-ALL) transformation by promoting ARE-mediated mRNA decay of the oncogenic transcription factor NOTCH1 mRNA. Participates in the delivery of target ARE-mRNAs to processing bodies (PBs). In addition to its cytosolic mRNA-decay function, plays a role in the regulation of nuclear mRNA 3'-end processing; modulates mRNA 3'-end maturation efficiency of the DLL4 mRNA through binding with an ARE embedded in a weak noncanonical polyadenylation (poly(A)) signal in endothelial cells. Also involved in the regulation of stress granule (SG) and P-body (PB) formation and fusion. Plays a role in vasculogenesis and endocardial development. Plays a role in the regulation of keratinocyte proliferation, differentiation and apoptosis. Plays a role in myoblast cell differentiation. The polypeptide is mRNA decay activator protein ZFP36L1 (Homo sapiens (Human)).